Consider the following 142-residue polypeptide: Hemoglobin subunit alpha (142 aa).

The Globin domain occupies 2-142 (VLSPADKTNV…VSTVLTSKYR (141 aa)). Serine 4 carries the post-translational modification Phosphoserine. Position 8 is an N6-succinyllysine (lysine 8). Phosphothreonine is present on threonine 9. Position 12 is an N6-succinyllysine (lysine 12). Lysine 17 carries the post-translational modification N6-acetyllysine; alternate. Position 17 is an N6-succinyllysine; alternate (lysine 17). Phosphotyrosine is present on tyrosine 25. Serine 36 bears the Phosphoserine mark. Lysine 41 carries the post-translational modification N6-succinyllysine. Residue serine 50 is modified to Phosphoserine. Histidine 59 provides a ligand contact to O2. Heme b is bound at residue histidine 88. Residue serine 103 is modified to Phosphoserine. At threonine 109 the chain carries Phosphothreonine. Phosphoserine is present on serine 125. A phosphothreonine mark is found at threonine 135 and threonine 138. Serine 139 bears the Phosphoserine mark.

The protein belongs to the globin family. In terms of assembly, heterotetramer of two alpha chains and two beta chains. Red blood cells.

Functionally, involved in oxygen transport from the lung to the various peripheral tissues. Hemopressin acts as an antagonist peptide of the cannabinoid receptor CNR1. Hemopressin-binding efficiently blocks cannabinoid receptor CNR1 and subsequent signaling. This is Hemoglobin subunit alpha (HBA) from Ailurus fulgens (Himalayan red panda).